We begin with the raw amino-acid sequence, 275 residues long: 3-methyl-2-oxobutanoate hydroxymethyltransferase (275 aa).

2 residues coordinate Mg(2+): aspartate 55 and aspartate 94. 3-methyl-2-oxobutanoate contacts are provided by residues 55–56, aspartate 94, and lysine 123; that span reads DS. Glutamate 125 lines the Mg(2+) pocket. Catalysis depends on glutamate 192, which acts as the Proton acceptor.

It belongs to the PanB family. Homodecamer; pentamer of dimers. The cofactor is Mg(2+).

It localises to the cytoplasm. The catalysed reaction is 3-methyl-2-oxobutanoate + (6R)-5,10-methylene-5,6,7,8-tetrahydrofolate + H2O = 2-dehydropantoate + (6S)-5,6,7,8-tetrahydrofolate. It functions in the pathway cofactor biosynthesis; (R)-pantothenate biosynthesis; (R)-pantoate from 3-methyl-2-oxobutanoate: step 1/2. Its function is as follows. Catalyzes the reversible reaction in which hydroxymethyl group from 5,10-methylenetetrahydrofolate is transferred onto alpha-ketoisovalerate to form ketopantoate. The protein is 3-methyl-2-oxobutanoate hydroxymethyltransferase of Halorhodospira halophila (strain DSM 244 / SL1) (Ectothiorhodospira halophila (strain DSM 244 / SL1)).